Consider the following 96-residue polypeptide: Large ribosomal subunit protein eL14 (96 aa).

Belongs to the eukaryotic ribosomal protein eL14 family.

The chain is Large ribosomal subunit protein eL14 from Saccharolobus islandicus (strain Y.N.15.51 / Yellowstone #2) (Sulfolobus islandicus).